A 937-amino-acid chain; its full sequence is Inactive tyrosine-protein kinase transmembrane receptor ROR1 (937 aa).

Residues 1–29 form the signal peptide; the sequence is MHRPRRRGTRPPLLALLAALLLAARGAAA. The Extracellular segment spans residues 30-406; it reads QETELSVSAE…KEKNKMEILY (377 aa). The region spanning 42–147 is the Ig-like C2-type domain; it reads PTSSWNISSE…EVVSSTGVLF (106 aa). N-linked (GlcNAc...) asparagine glycosylation is found at Asn-47 and Asn-66. 9 disulfide bridges follow: Cys-79/Cys-131, Cys-170/Cys-235, Cys-178/Cys-228, Cys-219/Cys-260, Cys-248/Cys-296, Cys-252/Cys-282, Cys-313/Cys-391, Cys-334/Cys-374, and Cys-362/Cys-386. In terms of domain architecture, FZ spans 165–299; the sequence is EEDGFCQPYR…SPEAANCIRI (135 aa). The N-linked (GlcNAc...) asparagine glycan is linked to Asn-184. Residues 312-391 form the Kringle domain; the sequence is KCYNSTGVDY…KSDLCDIPAC (80 aa). An N-linked (GlcNAc...) asparagine glycan is attached at Asn-315. Residues 407-427 form a helical membrane-spanning segment; it reads ILVPSVAIPLAIALLFFFICV. The Cytoplasmic segment spans residues 428–937; that stretch reads CRNNQKSSSA…HTESMISAEL (510 aa). Positions 473 to 746 constitute a Protein kinase domain; the sequence is VRFMEELGEC…PRFKDIHVRL (274 aa). ATP contacts are provided by residues 479–487 and Lys-506; that span reads LGECAFGKI. Tyr-645 is modified (phosphotyrosine; by autocatalysis). Residues 753–762 show a composition bias toward low complexity; the sequence is SSHTSSTTPS. Disordered regions lie at residues 753–779 and 833–890; these read SSHTSSTTPSGGNATTQTTSLSASPVS and AAHY…HMSI. A compositionally biased stretch (polar residues) spans 763-779; that stretch reads GGNATTQTTSLSASPVS. Low complexity predominate over residues 854-864; that stretch reads RSPSSASGSTS. Positions 865–880 are enriched in polar residues; sequence TGHVTSLPSSGSNQEA.

It belongs to the protein kinase superfamily. Tyr protein kinase family. ROR subfamily. Interacts with ERBB2 and IGFBP5. Expressed strongly in human heart, lung and kidney, but weakly in the CNS. Isoform Short is strongly expressed in fetal and adult CNS and in a variety of human cancers, including those originating from CNS or PNS neuroectoderm.

The protein resides in the membrane. The protein localises to the cell projection. It is found in the axon. Functionally, has very low kinase activity in vitro and is unlikely to function as a tyrosine kinase in vivo. Receptor for ligand WNT5A which activate downstream NFkB signaling pathway and may result in the inhibition of WNT3A-mediated signaling. In inner ear, crucial for spiral ganglion neurons to innervate auditory hair cells. Via IGFBP5 ligand, forms a complex with ERBB2 to enhance CREB oncogenic signaling. This chain is Inactive tyrosine-protein kinase transmembrane receptor ROR1 (ROR1), found in Homo sapiens (Human).